The primary structure comprises 171 residues: Large ribosomal subunit protein uL10 (171 aa).

It belongs to the universal ribosomal protein uL10 family. Part of the ribosomal stalk of the 50S ribosomal subunit. The N-terminus interacts with L11 and the large rRNA to form the base of the stalk. The C-terminus forms an elongated spine to which L12 dimers bind in a sequential fashion forming a multimeric L10(L12)X complex.

Functionally, forms part of the ribosomal stalk, playing a central role in the interaction of the ribosome with GTP-bound translation factors. The polypeptide is Large ribosomal subunit protein uL10 (Hyphomonas neptunium (strain ATCC 15444)).